The primary structure comprises 695 residues: MPRIPSPPQAGLRARAARAFRLELTHPFRHDLLGVDQVADGFEFFTDRSVVAMRVNGELKDLATIVTTTDVVEPVTIYSPDGLAILRHSTAHVLAQAVQTVNPEAKLGIGPPIADGFYYDFDVAEPFTPEDLKALDKEMSRIQRAGQRFVRRVVTDEEARAELAGEPYKLELIGLKGSDAESAEVGGEESVEVGSGELTIYDNVDPKTGETIWKDLCRGPHLPNTRMIGNGWALTRVAAAYWRGSEKNPQLQRIYGTAWPSKDELRAYQTRMEEAAKRDHRKLGVELDLFSFPDEIGSGLAVFHPKGGIIRKEIEDYMRDRLIANGYEMVNTPHITKGHLFETSQHLNWYREGMFPPMHLDEERDAEGNVTRQGQDYYLKPMNCPMHNLIFRSRGRSYRELPLRLSEFGTVYRYEKSGTLSGLTRVRGLTQDDAHIYVTEEQIRDEFARQLQFVLETLRGYGLTDFYLELSTKDPEKYVGSDESWETATETLREVAVESGLELVDDPGGAAFYGPKISVQARDAIGRTWQLSTVQLDFNQPELFELEYNAADGTRKQPAMIHRALLGSIERFFAILLEHHAGAFPVWLAPTQVVGIPVADAYGPFLDDVIAQLRARGVRAEVDHSDDRMQKKIRTHTKAKVPFQLIVGEEDASAGTVSFRFRDGTQLNGVAVDEAIERIVASIQTHELVDTAWPA.

Residues 1 to 76 form the TGS domain; sequence MPRIPSPPQA…TTTDVVEPVT (76 aa). Residues 279–585 are catalytic; the sequence is DHRKLGVELD…LLEHHAGAFP (307 aa). 3 residues coordinate Zn(2+): C384, H435, and H562.

It belongs to the class-II aminoacyl-tRNA synthetase family. Homodimer. Zn(2+) is required as a cofactor.

Its subcellular location is the cytoplasm. The enzyme catalyses tRNA(Thr) + L-threonine + ATP = L-threonyl-tRNA(Thr) + AMP + diphosphate + H(+). Catalyzes the attachment of threonine to tRNA(Thr) in a two-step reaction: L-threonine is first activated by ATP to form Thr-AMP and then transferred to the acceptor end of tRNA(Thr). Also edits incorrectly charged L-seryl-tRNA(Thr). The chain is Threonine--tRNA ligase from Leifsonia xyli subsp. xyli (strain CTCB07).